The following is a 236-amino-acid chain: MNELKDFFFLGKPIQTEIGEIDFIRLKDYPLYTKELSMLRMNKKSLIKEYSRFNEDGSLDPFIIEMKKRDLYEIVHSVLPDFHEAYFKVFSKVLINKDSLSLIGKHNFPRLRKLILDMHCITEDKVVDNDELQEFHDISKSLKQQDSQSDLKDIVSCVAAFNGYTYEEISEMTMYQLYLSFYRMAEVMNYNTTTLFATVSPDVKVSDWSSHINLYKEESYHLSTKDAKNIEQLFGG.

In Bacillus subtilis (strain 168), this protein is SPbeta prophage-derived uncharacterized protein YomV (yomV).